A 439-amino-acid polypeptide reads, in one-letter code: Testican-1 (439 aa).

Positions 1–21 (MPAIAVLAAAAAAWCFLQVES) are cleaved as a signal peptide. 5 cysteine pairs are disulfide-bonded: Cys-86/Cys-97, Cys-91/Cys-107, Cys-136/Cys-166, Cys-139/Cys-159, and Cys-148/Cys-180. The Kazal-like domain occupies 130-182 (PSNLVKCKPCPVAQSAMVCGSDGHSYTSKCKLEFHACSTGKSLATLCDGPCPC). O-linked (GalNAc...) threonine glycosylation is present at Thr-228. In terms of domain architecture, Thyroglobulin type-1 spans 310–376 (GLPCQNEMNR…GSRKQGAVSC (67 aa)). Disulfide bonds link Cys-313-Cys-337, Cys-348-Cys-355, and Cys-357-Cys-376. O-linked (Xyl...) (glycosaminoglycan) serine glycans are attached at residues Ser-383 and Ser-388. Positions 415 to 439 (VHTRAVTEDDEDEDDDKEDEVGYIW) are disordered. Residues 422–439 (EDDEDEDDDKEDEVGYIW) are compositionally biased toward acidic residues.

O-glycosylated. Glycosaminoglycan that contains chondroitin sulfate and heparan sulfate.

Its subcellular location is the secreted. The protein localises to the extracellular space. It localises to the extracellular matrix. May play a role in cell-cell and cell-matrix interactions. May contribute to various neuronal mechanisms in the central nervous system. The polypeptide is Testican-1 (SPOCK1) (Homo sapiens (Human)).